The chain runs to 411 residues: Peptidase T (411 aa).

His78 serves as a coordination point for Zn(2+). The active site involves Asp80. Asp140 provides a ligand contact to Zn(2+). Glu173 serves as the catalytic Proton acceptor. Zn(2+)-binding residues include Glu174, Asp196, and His379.

Belongs to the peptidase M20B family. Zn(2+) serves as cofactor.

The protein localises to the cytoplasm. It catalyses the reaction Release of the N-terminal residue from a tripeptide.. Its function is as follows. Cleaves the N-terminal amino acid of tripeptides. This chain is Peptidase T, found in Yersinia pseudotuberculosis serotype O:3 (strain YPIII).